We begin with the raw amino-acid sequence, 167 residues long: Ribosome maturation factor RimM (167 aa).

A PRC barrel domain is found at 92–166 (DDEFYHADLI…RIVADPPEEQ (75 aa)).

Belongs to the RimM family. In terms of assembly, binds ribosomal protein uS19.

Its subcellular location is the cytoplasm. An accessory protein needed during the final step in the assembly of 30S ribosomal subunit, possibly for assembly of the head region. Essential for efficient processing of 16S rRNA. May be needed both before and after RbfA during the maturation of 16S rRNA. It has affinity for free ribosomal 30S subunits but not for 70S ribosomes. The sequence is that of Ribosome maturation factor RimM from Paracoccus denitrificans (strain Pd 1222).